The following is a 351-amino-acid chain: Snurportin-1 (351 aa).

Disordered stretches follow at residues 1–66 (MESS…QKGI) and 294–322 (EQKKKVNEQKEDPHTMEAEEDVESDEYDS). Residues 8 to 42 (LYKKGLDIGEQQKQRQKELLKQQKLRRQQEQDDYR) show a composition bias toward basic and acidic residues. Residues 52 to 62 (PRKKSGKRSGH) are compositionally biased toward basic residues. Residues 274-330 (VLQYMDAFEQKLAEHRRTLKEQKKKVNEQKEDPHTMEAEEDVESDEYDSLKRVLDQQ) adopt a coiled-coil conformation. Positions 294 to 310 (EQKKKVNEQKEDPHTME) are enriched in basic and acidic residues. Acidic residues predominate over residues 311-320 (AEEDVESDEY).

It belongs to the snurportin family. As to quaternary structure, interacts with components of the snRNP complex including SmB and Smn; these interactions are RNA-dependent. Interacts with importin-7 msk but not with importin subunit beta Fs(2)Ket; the interaction is RNA-dependent.

The protein localises to the nucleus. It localises to the cytoplasm. It is found in the U-body. The protein resides in the nucleus speckle. Its subcellular location is the cajal body. Its function is as follows. Functions as an U snRNP-specific nuclear import adapter. Involved in the trimethylguanosine (m3G)-cap-dependent nuclear import of U snRNPs. Binds specifically to the terminal m3G-cap U snRNAs. This is Snurportin-1 from Drosophila melanogaster (Fruit fly).